The chain runs to 339 residues: MVEILKKPVTGRSVWQRAQVEDASQWTYVLDEGMRAEILEAAERINEQGLTVWDLDRKAVPLERAGKLVAQCVEQLEHGFGLAMLRGVPTEGLTVAESQVVMGVVGLHLGTAVAQNGHGDRVVSIRDYGKGRLNSKTIRGYQTNESLPWHSDAPDIAALLCLTQAKHGGEFHVASAMHIYNTLLQEAPELLGLYYAGVFFDYRGEEPPGEPPAYRNAIFGYHNGQLSCRYFLRNFADSGTAKLGFEQPEVEKLALDTFEEIASRPENHVSMRLEPGDMQLVDDNVTVHRRGAYSDEEDGSTDSSRHLLRLWINVENGRQFPTSLSTHRWGMKAAAKPTH.

Residues histidine 150, aspartate 152, and histidine 288 each coordinate Fe(2+).

It belongs to the TfdA dioxygenase family. As to quaternary structure, homodimer. The cofactor is Fe(2+).

It catalyses the reaction 3-(N-acetyl-N-hydroxy)aminopropylphosphonate + 2-oxoglutarate + O2 = (R)-(3-(acetylhydroxyamino)-2-hydroxypropyl)phosphonate + succinate + CO2. It participates in antibiotic biosynthesis. In terms of biological role, monooxygenase involved in the biosynthesis of the phosphonate antibiotic FR-33289, an antimalarial agent. Catalyzes the oxidative decarboxylation of the antibiotic FR-900098 (3-(N-acetyl-N-hydroxy)aminopropylphosphonate) to form FR-33289 ((R)-(3-(acetylhydroxyamino)-2-hydroxypropyl)phosphonate). This chain is FR-33289 synthase, found in Streptomyces rubellomurinus (strain ATCC 31215).